Here is a 393-residue protein sequence, read N- to C-terminus: MFSWLARMALFCLRPMRRYGRMNRDDDDDDDHDGDSSSSGDSLLWSRELERHSFGDFSIAVVQANEVIEDHSQVETGNGAVFVGVYDGHGGPEASRYISDHLFSHLMRVSRERSCISEEALRAAFSATEEGFLTLVRRTCGLKPLIAAVGSCCLVGVIWKGTLLIANVGDSRAVLGSMGSNNNRSNKIVAEQLTSDHNAALEEVRQELRSLHPDDSHIVVLKHGVWRIKGIIQVSRSIGDAYLKRPEFSLDPSFPRFHLAEELQRPVLSAEPCVYTRVLQTSDKFVIFASDGLWEQMTNQQAVEIVNKHPRPGIARRLVRRAITIAAKKREMNYDDLKKVERGVRRFFHDDITVVVIFIDNELLMVEKATVPELSIKGFSHTVGPSKFSIFLS.

A PPM-type phosphatase domain is found at 56–359 (DFSIAVVQAN…DDITVVVIFI (304 aa)). Mn(2+) contacts are provided by aspartate 87, glycine 88, aspartate 291, and aspartate 350.

The protein belongs to the PP2C family. Requires Mg(2+) as cofactor. Mn(2+) is required as a cofactor.

It carries out the reaction O-phospho-L-seryl-[protein] + H2O = L-seryl-[protein] + phosphate. The catalysed reaction is O-phospho-L-threonyl-[protein] + H2O = L-threonyl-[protein] + phosphate. May dephosphorylate and repress plasma membrane H(+)-ATPases (PM H(+)-ATPases, e.g. AHA1 and AHA2), thus influencing negatively plant growth and fitness. This chain is Probable protein phosphatase 2C 68, found in Arabidopsis thaliana (Mouse-ear cress).